We begin with the raw amino-acid sequence, 115 residues long: DNA-binding protein PYRAB09250 (115 aa).

It belongs to the PDCD5 family.

This is DNA-binding protein PYRAB09250 from Pyrococcus abyssi (strain GE5 / Orsay).